The primary structure comprises 324 residues: MASPTLKLNSGYDMPQVGFGLWKVDNAVCADTVYNAIKAGYRLFDGACDYGNEKECGEGVARAIKDGLVKREDLFIVSKLWQTFHDEDKVEPITRRQLADWQIDYFDLFLVHFPAALEYVDPSVRYPPGWFYDGKSEVRWSKTTTLQQTWGAMERLVDKGLARSIGVSNYQAQSVYDALIYARIKPATLQIEHHPYLQQPDLVSLAQTEGIVVTAYSSFGPTGFMELDMPRAKSVAPLMDSPVIKALADKHRRTPAQVLLRWATQRGIAVIPKTSRPEVMAQNLDNTSFDLDSEDLAKIADMDLNIRFNKPTNYFSANKLYLFG.

The active-site Proton donor is the Y50. H112 provides a ligand contact to substrate. NAD(+) is bound by residues 168 to 169 (SN), 217 to 226 (SSFGPTGFME), and 273 to 283 (KTSRPEVMAQN).

It belongs to the aldo/keto reductase family.

The catalysed reaction is an alditol + NAD(+) = an aldose + NADH + H(+). It catalyses the reaction an alditol + NADP(+) = an aldose + NADPH + H(+). The enzyme catalyses xylitol + NAD(+) = D-xylose + NADH + H(+). It carries out the reaction xylitol + NADP(+) = D-xylose + NADPH + H(+). The protein operates within carbohydrate metabolism; D-xylose degradation. Its pathway is carbohydrate degradation; L-arabinose degradation via L-arabinitol; D-xylulose 5-phosphate from L-arabinose (fungal route): step 1/5. Functionally, catalyzes the initial reaction in the xylose utilization pathway by reducing D-xylose into xylitol. Xylose is a major component of hemicelluloses such as xylan. Most fungi utilize D-xylose via three enzymatic reactions, xylose reductase (XR), xylitol dehydrogenase (XDH), and xylulokinase, to form xylulose 5-phosphate, which enters pentose phosphate pathway. Also major aldose reductase in pentose and D-galactose catabolism. Reduces the pentose L-arabinose and the hexose D-galactose to their respective polyols. Responsible for extracellular beta-galactosidase formation and cellulase induction during growth on lactose. This chain is NAD(P)H-dependent D-xylose reductase xyl1 (xyl1), found in Hypocrea jecorina (Trichoderma reesei).